The chain runs to 126 residues: MLSHMLKAKLHMAKVTQAELWYDGSCAIDADLVALAGMREFEQIDIYNVSNGERFHTYIILAEPGSGTISMNGAAARKVAVGDRVIIATYGHFTEAELLNHKPKLVYLNENNGVERTSNAIPMQVA.

Residue Ser-25 is the Schiff-base intermediate with substrate; via pyruvic acid of the active site. A Pyruvic acid (Ser) modification is found at Ser-25. Thr-57 contacts substrate. Tyr-58 acts as the Proton donor in catalysis. Residue 73–75 (GAA) participates in substrate binding.

This sequence belongs to the PanD family. Heterooctamer of four alpha and four beta subunits. It depends on pyruvate as a cofactor. Post-translationally, is synthesized initially as an inactive proenzyme, which is activated by self-cleavage at a specific serine bond to produce a beta-subunit with a hydroxyl group at its C-terminus and an alpha-subunit with a pyruvoyl group at its N-terminus.

It localises to the cytoplasm. The enzyme catalyses L-aspartate + H(+) = beta-alanine + CO2. The protein operates within cofactor biosynthesis; (R)-pantothenate biosynthesis; beta-alanine from L-aspartate: step 1/1. Its function is as follows. Catalyzes the pyruvoyl-dependent decarboxylation of aspartate to produce beta-alanine. This chain is Aspartate 1-decarboxylase, found in Cellvibrio japonicus (strain Ueda107) (Pseudomonas fluorescens subsp. cellulosa).